The primary structure comprises 64 residues: Prokaryotic ubiquitin-like protein Pup (64 aa).

Composition is skewed to basic and acidic residues over residues 1–11 (MAQEQTKRTGG) and 25–34 (GQERREKLAE). Residues 1-38 (MAQEQTKRTGGGDEDEGSAGPEAAGQERREKLAEDTDD) are disordered. Residues 21–58 (PEAAGQERREKLAEDTDDLLDEIDDVLEENAEDFVRAY) form an ARC ATPase binding region. The stretch at 24–52 (AGQERREKLAEDTDDLLDEIDDVLEENAE) forms a coiled coil. Position 64 is a deamidated glutamine (Q64). Q64 participates in a covalent cross-link: Isoglutamyl lysine isopeptide (Gln-Lys) (interchain with K-? in acceptor proteins).

The protein belongs to the prokaryotic ubiquitin-like protein family. In terms of assembly, strongly interacts with the proteasome-associated ATPase ARC through a hydrophobic interface; the interacting region of Pup lies in its C-terminal half. There is one Pup binding site per ARC hexamer ring. Is modified by deamidation of its C-terminal glutamine to glutamate by the deamidase Dop, a prerequisite to the subsequent pupylation process.

It participates in protein degradation; proteasomal Pup-dependent pathway. Protein modifier that is covalently attached to lysine residues of substrate proteins, thereby targeting them for proteasomal degradation. The tagging system is termed pupylation. This is Prokaryotic ubiquitin-like protein Pup from Nocardia farcinica (strain IFM 10152).